Consider the following 724-residue polypeptide: Ribosomal RNA large subunit methyltransferase K/L (724 aa).

Residues 42-153 (DAQRLVLWSR…KGRATLSVDL (112 aa)) form the THUMP domain.

This sequence belongs to the methyltransferase superfamily. RlmKL family.

It is found in the cytoplasm. It carries out the reaction guanosine(2445) in 23S rRNA + S-adenosyl-L-methionine = N(2)-methylguanosine(2445) in 23S rRNA + S-adenosyl-L-homocysteine + H(+). The enzyme catalyses guanosine(2069) in 23S rRNA + S-adenosyl-L-methionine = N(2)-methylguanosine(2069) in 23S rRNA + S-adenosyl-L-homocysteine + H(+). Specifically methylates the guanine in position 2445 (m2G2445) and the guanine in position 2069 (m7G2069) of 23S rRNA. This Xylella fastidiosa (strain M12) protein is Ribosomal RNA large subunit methyltransferase K/L.